The following is a 638-amino-acid chain: 1-deoxy-D-xylulose-5-phosphate synthase (638 aa).

Residues H75 and 116–118 (AHS) each bind thiamine diphosphate. D147 provides a ligand contact to Mg(2+). Thiamine diphosphate is bound by residues 148–149 (GA), N177, Y288, and E370. N177 lines the Mg(2+) pocket.

The protein belongs to the transketolase family. DXPS subfamily. As to quaternary structure, homodimer. The cofactor is Mg(2+). It depends on thiamine diphosphate as a cofactor.

It catalyses the reaction D-glyceraldehyde 3-phosphate + pyruvate + H(+) = 1-deoxy-D-xylulose 5-phosphate + CO2. The protein operates within metabolic intermediate biosynthesis; 1-deoxy-D-xylulose 5-phosphate biosynthesis; 1-deoxy-D-xylulose 5-phosphate from D-glyceraldehyde 3-phosphate and pyruvate: step 1/1. In terms of biological role, catalyzes the acyloin condensation reaction between C atoms 2 and 3 of pyruvate and glyceraldehyde 3-phosphate to yield 1-deoxy-D-xylulose-5-phosphate (DXP). The polypeptide is 1-deoxy-D-xylulose-5-phosphate synthase (Cupriavidus necator (strain ATCC 17699 / DSM 428 / KCTC 22496 / NCIMB 10442 / H16 / Stanier 337) (Ralstonia eutropha)).